The following is a 242-amino-acid chain: N-alpha-acetyltransferase 60 (242 aa).

The Cytoplasmic segment spans residues 1–192 (MTEAVPSSAL…GGHPPWTILD (192 aa)). An N-acetyltransferase domain is found at 13-182 (VSLRLLCHDD…DGFTYVLYIN (170 aa)). Tyr38 contacts substrate. N6-acetyllysine; by autocatalysis is present on Lys79. The active site involves Tyr97. Residue Leu99 participates in substrate binding. Residue 101–103 (LGV) participates in acetyl-CoA binding. N6-acetyllysine; by autocatalysis is present on residues Lys105, Lys109, and Lys121. Residue 109-114 (KHGIGS) participates in acetyl-CoA binding. Residue His138 is part of the active site. Acetyl-CoA-binding positions include Asn143 and 150–153 (YENR). Residue Lys156 is modified to N6-acetyllysine; by autocatalysis. The segment at 162-173 (PYYYSIRGVLKD) is required for homodimerization. Substrate is bound at residue Tyr165. An intramembrane region (helical) is located at residues 193-236 (YIQHLGSALANLSPCSIPHRIYRQAQSLLCSFLPWSSISTKGGI). The Cytoplasmic segment spans residues 237–242 (EYSRTM).

It belongs to the acetyltransferase family. NAA60 subfamily. Monomer and homodimer; monomer in presence of substrate and homodimer in its absence. Acetylated: autoacetylation is required for optimal acetyltransferase activity.

It is found in the golgi apparatus membrane. It carries out the reaction N-terminal L-methionyl-[transmembrane protein] + acetyl-CoA = N-terminal N(alpha)-acetyl-L-methionyl-[transmembrane protein] + CoA + H(+). It catalyses the reaction L-lysyl-[protein] + acetyl-CoA = N(6)-acetyl-L-lysyl-[protein] + CoA + H(+). In terms of biological role, N-alpha-acetyltransferase that specifically mediates the acetylation of N-terminal residues of the transmembrane proteins, with a strong preference for N-termini facing the cytosol. Displays N-terminal acetyltransferase activity towards a range of N-terminal sequences including those starting with Met-Lys, Met-Val, Met-Ala and Met-Met. Required for normal chromosomal segregation during anaphase. May also show histone acetyltransferase activity; such results are however unclear in vivo and would require additional experimental evidences. This is N-alpha-acetyltransferase 60 (NAA60) from Bos taurus (Bovine).